Here is a 550-residue protein sequence, read N- to C-terminus: Probable terpene synthase 2 (550 aa).

3 residues coordinate Mg(2+): Asp-305, Asp-309, and Glu-457. The DDXXD motif motif lies at Asp-305–Asp-309.

It belongs to the terpene synthase family. The cofactor is Mg(2+).

Its function is as follows. Probable sesquiterpene synthase. The sequence is that of Probable terpene synthase 2 (TPS2) from Ricinus communis (Castor bean).